We begin with the raw amino-acid sequence, 219 residues long: Endonuclease V (219 aa).

Mg(2+) is bound by residues D41 and D107.

The protein belongs to the endonuclease V family. Mg(2+) serves as cofactor.

The protein localises to the cytoplasm. It carries out the reaction Endonucleolytic cleavage at apurinic or apyrimidinic sites to products with a 5'-phosphate.. Functionally, DNA repair enzyme involved in the repair of deaminated bases. Selectively cleaves double-stranded DNA at the second phosphodiester bond 3' to a deoxyinosine leaving behind the intact lesion on the nicked DNA. This chain is Endonuclease V, found in Desulfurococcus amylolyticus (strain DSM 18924 / JCM 16383 / VKM B-2413 / 1221n) (Desulfurococcus kamchatkensis).